A 517-amino-acid chain; its full sequence is Serine hydroxymethyltransferase 2, mitochondrial (517 aa).

A mitochondrion-targeting transit peptide spans methionine 1 to serine 31. Lysine 287 is subject to N6-(pyridoxal phosphate)lysine.

It belongs to the SHMT family. Homotetramer. Pyridoxal 5'-phosphate serves as cofactor.

Its subcellular location is the mitochondrion. The catalysed reaction is (6R)-5,10-methylene-5,6,7,8-tetrahydrofolate + glycine + H2O = (6S)-5,6,7,8-tetrahydrofolate + L-serine. It participates in one-carbon metabolism; tetrahydrofolate interconversion. Catalyzes the interconversion of serine and glycine. This chain is Serine hydroxymethyltransferase 2, mitochondrial, found in Flaveria pringlei.